The sequence spans 50 residues: MKLPVQQVYSVYGGKDLPKGHSHSTMPFLSKLQFLTKIYLLDIHTQPFFI.

The polypeptide is Bacteriocin-like protein SboX (sboX) (Bacillus subtilis (strain 168)).